The chain runs to 369 residues: p21-activated protein kinase-interacting protein 1-like (369 aa).

WD repeat units follow at residues 33 to 70, 73 to 111, 114 to 153, 195 to 233, and 236 to 278; these read AHTASLSAVAVNSKYVVTGSRDESIQIYDMRKKVEHGA, QHNGTITCLEFYGTAHLLSGAEDGLICIWNTKRWECLKS, AHKGHVTSLSIHPSGKLALSVGTDKTLRTWNLVEGRSAFI, TIEKRISSIRFITDSVLAIAGDDEIIRFYSCDSQKCLCE, and AREN…NNVP. The disordered stretch occupies residues 311-369; it reads ATSTEANESEKPSAVKKKKVCGMNKSGKLTKQRRRIVPAKRKLEAPLQKKKKKKQNSSE. Composition is skewed to basic residues over residues 338–350 and 358–369; these read KLTKQRRRIVPAK and QKKKKKKQNSSE.

It is found in the nucleus. The protein resides in the nucleolus. In terms of biological role, negatively regulates the PAK1 kinase. PAK1 is a member of the PAK kinase family, which has been shown to play a positive role in the regulation of signaling pathways involving MAPK8 and RELA. PAK1 exists as an inactive homodimer, which is activated by binding of small GTPases such as CDC42 to an N-terminal regulatory domain. PAK1IP1 also binds to the N-terminus of PAK1, and inhibits the specific activation of PAK1 by CDC42. May be involved in ribosomal large subunit assembly. In Gallus gallus (Chicken), this protein is p21-activated protein kinase-interacting protein 1-like (PAK1IP1).